A 104-amino-acid polypeptide reads, in one-letter code: Flagellar hook-basal body complex protein FliE (104 aa).

The protein belongs to the FliE family.

The protein resides in the bacterial flagellum basal body. In Salmonella arizonae (strain ATCC BAA-731 / CDC346-86 / RSK2980), this protein is Flagellar hook-basal body complex protein FliE.